The chain runs to 132 residues: uncharacterized protein (132 aa).

The segment at 68–91 (WSRTSPNSSRSSPRSPASMASTSS) is disordered.

This is an uncharacterized protein from Streptomyces cacaoi.